A 527-amino-acid polypeptide reads, in one-letter code: Pentatricopeptide repeat-containing protein At4g25270, chloroplastic (527 aa).

Residues 1–47 (MVSIVVHKPSFSYPSVSSSSMKKKPRHHQQLKQHRQNQYNNNGFTSL) constitute a chloroplast transit peptide. The segment at 12-44 (SYPSVSSSSMKKKPRHHQQLKQHRQNQYNNNGF) is disordered. Residues 21–35 (MKKKPRHHQQLKQHR) are compositionally biased toward basic residues. PPR repeat units lie at residues 126 to 156 (NLGI…MSKR), 159 to 193 (SPFA…GVKP), 194 to 228 (DRFT…GFGY), 229 to 259 (DVYV…IPHK), 260 to 294 (DYVS…GIEP), 295 to 326 (DKVA…GMEW), 327 to 361 (ELSV…DTVS), 367 to 389 (SAHS…NAKP), 390 to 425 (DGIT…GIDP), and 426 to 457 (KMEH…MGLE). A type E motif; degenerate region spans residues 462 to 527 (VWGALLYACY…QMMVDRGLET (66 aa)).

This sequence belongs to the PPR family. PCMP-E subfamily.

It localises to the plastid. Its subcellular location is the chloroplast. This chain is Pentatricopeptide repeat-containing protein At4g25270, chloroplastic (PCMP-E53), found in Arabidopsis thaliana (Mouse-ear cress).